We begin with the raw amino-acid sequence, 207 residues long: Ribosomal RNA small subunit methyltransferase G (207 aa).

S-adenosyl-L-methionine is bound by residues G73, L78, 124 to 125 (VE), and R139.

This sequence belongs to the methyltransferase superfamily. RNA methyltransferase RsmG family.

It is found in the cytoplasm. It catalyses the reaction guanosine(527) in 16S rRNA + S-adenosyl-L-methionine = N(7)-methylguanosine(527) in 16S rRNA + S-adenosyl-L-homocysteine. In terms of biological role, specifically methylates the N7 position of guanine in position 527 of 16S rRNA. The polypeptide is Ribosomal RNA small subunit methyltransferase G (Escherichia coli O1:K1 / APEC).